Here is a 209-residue protein sequence, read N- to C-terminus: Chromophore lyase CpcT/CpeT 1 (209 aa).

This sequence belongs to the CpcT/CpeT biliprotein lyase family.

In terms of biological role, covalently attaches a chromophore to Cys residue(s) of phycobiliproteins. The chain is Chromophore lyase CpcT/CpeT 1 from Trichodesmium erythraeum (strain IMS101).